The following is a 34-amino-acid chain: Photosystem II reaction center protein M (34 aa).

Residues 5-25 traverse the membrane as a helical segment; it reads ILAFIATALFILVPTAFLLII.

It belongs to the PsbM family. PSII is composed of 1 copy each of membrane proteins PsbA, PsbB, PsbC, PsbD, PsbE, PsbF, PsbH, PsbI, PsbJ, PsbK, PsbL, PsbM, PsbT, PsbX, PsbY, PsbZ, Psb30/Ycf12, at least 3 peripheral proteins of the oxygen-evolving complex and a large number of cofactors. It forms dimeric complexes.

It is found in the plastid. The protein resides in the chloroplast thylakoid membrane. One of the components of the core complex of photosystem II (PSII). PSII is a light-driven water:plastoquinone oxidoreductase that uses light energy to abstract electrons from H(2)O, generating O(2) and a proton gradient subsequently used for ATP formation. It consists of a core antenna complex that captures photons, and an electron transfer chain that converts photonic excitation into a charge separation. This subunit is found at the monomer-monomer interface. This chain is Photosystem II reaction center protein M, found in Buxus microphylla (Littleleaf boxwood).